The chain runs to 383 residues: MGLRVAQTGFVALVLLQSCAAYKLVCYYTSWSQYREGDGSCFPDAIDPFLCTHIIYSFANISNNEIDTWEWNDVTLYDTLNTLKNRNPNLKTLLSVGGWNFGSQRFSKIASKTQSRRTFIKSVPPFLRTHGFDGLDLAWLYPGRRDKRHLTTLVKEMKAEFIREAQAGTEQLLLSAAVSAGKVAIDRGYDIAQISQHLDFISLLTYDFHGAWRQTTGHHSPLFRGQEDASSDRFSNADYAVSYVLRLGAPANKLVMGIPTFGRSFTLASSKTDVGAPVSGPGIPGRFTKEKGILAYYEICDFLQGATTHRFRDQQVPYATKGNQWVGYDDQESVKNKAKYLKSRQLAGAMVWALDLDDFRGNFCGQNLRFPLTSAIKDVLAAA.

A signal peptide spans 1 to 21; that stretch reads MGLRVAQTGFVALVLLQSCAA. Residues 22–383 enclose the GH18 domain; the sequence is YKLVCYYTSW…SAIKDVLAAA (362 aa). Cysteine 26 and cysteine 51 are joined by a disulfide. A glycan (N-linked (GlcNAc...) asparagine) is linked at asparagine 60. Chitin-binding positions include 70–71, 97–100, tyrosine 141, 204–207, and arginine 263; these read EW, GGWN, and LTYD. Cysteines 300 and 364 form a disulfide. An important for AKT1 activation and IL8 production region spans residues 324–338; sequence QWVGYDDQESVKNKA. Position 352 (tryptophan 352) interacts with chitin.

The protein belongs to the glycosyl hydrolase 18 family. As to quaternary structure, monomer. Detected in smooth muscle cells in atherosclerotic plaques. Detected in regions of vascular occlusion in the aorta.

Its subcellular location is the secreted. It localises to the extracellular space. The protein resides in the cytoplasm. It is found in the perinuclear region. The protein localises to the endoplasmic reticulum. Functionally, carbohydrate-binding lectin with a preference for chitin. Has no chitinase activity. May play a role in tissue remodeling and in the capacity of cells to respond to and cope with changes in their environment. Plays a role in T-helper cell type 2 (Th2) inflammatory response and IL-13-induced inflammation, regulating allergen sensitization, inflammatory cell apoptosis, dendritic cell accumulation and M2 macrophage differentiation. Facilitates invasion of pathogenic enteric bacteria into colonic mucosa and lymphoid organs. Mediates activation of AKT1 signaling pathway and subsequent IL8 production in colonic epithelial cells. Regulates antibacterial responses in lung by contributing to macrophage bacterial killing, controlling bacterial dissemination and augmenting host tolerance. Also regulates hyperoxia-induced injury, inflammation and epithelial apoptosis in lung. Stimulates migration and adhesion of cultured vascular smooth muscle cells. The chain is Chitinase-3-like protein 1 (CHI3L1) from Sus scrofa (Pig).